Here is a 246-residue protein sequence, read N- to C-terminus: MKPSQVRSKAFAMPLTSPAFPMGPYRFVNREFLIITYRTDMDRLREIVPEPLEVKEPLVHYEFIRMPDSTGFGDYTESGQVIPVEYKGQPGGYTLAMYLNDHPPIAGGRELWGFPKKLAQPTLQTHIDTLLGTLDYGPVRVATGTMGYKHQELDLEEQAKRLAGANFLLKIIPHVDGSARVCELVRYYLQDIEMKGAWTGPASLQLAPHALAPVADLPVLEIVEARHLLADLTLGLGEVVYDYLAQ.

Residue lysine 116 is the Schiff-base intermediate with acetoacetate of the active site.

Belongs to the ADC family.

It catalyses the reaction acetoacetate + H(+) = acetone + CO2. Its function is as follows. Catalyzes the conversion of acetoacetate to acetone and carbon dioxide. The chain is Acetoacetate decarboxylase from Burkholderia mallei (strain NCTC 10247).